Reading from the N-terminus, the 109-residue chain is Large ribosomal subunit protein bL19 (109 aa).

It belongs to the bacterial ribosomal protein bL19 family.

This protein is located at the 30S-50S ribosomal subunit interface and may play a role in the structure and function of the aminoacyl-tRNA binding site. The polypeptide is Large ribosomal subunit protein bL19 (Rubrobacter xylanophilus (strain DSM 9941 / JCM 11954 / NBRC 16129 / PRD-1)).